A 581-amino-acid chain; its full sequence is Pentatricopeptide repeat-containing protein At3g56550 (581 aa).

PPR repeat units lie at residues serine 70–arginine 104, aspartate 106–aspartate 140, aspartate 141–arginine 171, aspartate 172–glycine 206, aspartate 207–serine 241, cysteine 242–arginine 272, aspartate 273–proline 307, asparagine 308–glutamine 338, and asparagine 344–valine 378. The tract at residues leucine 379–glycine 454 is type E motif. Residues aspartate 455–isoleucine 485 are type E(+) motif. A type DYW motif region spans residues leucine 486 to tryptophan 581.

The protein belongs to the PPR family. PCMP-H subfamily.

This Arabidopsis thaliana (Mouse-ear cress) protein is Pentatricopeptide repeat-containing protein At3g56550 (PCMP-H80).